Reading from the N-terminus, the 1050-residue chain is Antibiotic efflux pump membrane transporter ArpB (1050 aa).

12 helical membrane passes run 10–30 (IFAW…ILKL), 339–359 (GVIH…YLFL), 370–390 (MTVP…GFSI), 393–413 (LTMF…IVVV), 440–460 (GALV…AFFG), 472–492 (ITIV…TPAL), 539–559 (VPFL…FARI), 871–891 (MPAL…ALYE), 893–913 (WSIP…ALIA), 923–943 (VYFL…AILI), 972–992 (IIMT…ASGA), and 1004–1024 (VIGG…LFFV).

The protein belongs to the resistance-nodulation-cell division (RND) (TC 2.A.6) family.

It localises to the cell inner membrane. Functionally, the inner membrane transporter component of an antibiotic efflux pump. Confers resistance to numerous structurally unrelated antibiotics such as carbenicillin, chloramphenicol, erythromycin, novobiocin, streptomycin and tetracycline. Is not involved in organic solvent efflux. This is Antibiotic efflux pump membrane transporter ArpB (arpB) from Pseudomonas putida (Arthrobacter siderocapsulatus).